Reading from the N-terminus, the 445-residue chain is tRNA-2-methylthio-N(6)-dimethylallyladenosine synthase (445 aa).

Residues 2 to 119 enclose the MTTase N-terminal domain; it reads KKLYIRTFGC…LPQLIAERRH (118 aa). [4Fe-4S] cluster contacts are provided by C11, C48, C82, C156, C160, and C163. The Radical SAM core domain maps to 142–378; that stretch reads RVEGASAFVS…RIDQQAQAIS (237 aa). Residues 379-442 enclose the TRAM domain; the sequence is QAMVGRVERA…PHSLRGEIVT (64 aa).

The protein belongs to the methylthiotransferase family. MiaB subfamily. Monomer. It depends on [4Fe-4S] cluster as a cofactor.

The protein resides in the cytoplasm. It carries out the reaction N(6)-dimethylallyladenosine(37) in tRNA + (sulfur carrier)-SH + AH2 + 2 S-adenosyl-L-methionine = 2-methylsulfanyl-N(6)-dimethylallyladenosine(37) in tRNA + (sulfur carrier)-H + 5'-deoxyadenosine + L-methionine + A + S-adenosyl-L-homocysteine + 2 H(+). Its function is as follows. Catalyzes the methylthiolation of N6-(dimethylallyl)adenosine (i(6)A), leading to the formation of 2-methylthio-N6-(dimethylallyl)adenosine (ms(2)i(6)A) at position 37 in tRNAs that read codons beginning with uridine. The protein is tRNA-2-methylthio-N(6)-dimethylallyladenosine synthase of Aromatoleum aromaticum (strain DSM 19018 / LMG 30748 / EbN1) (Azoarcus sp. (strain EbN1)).